The primary structure comprises 258 residues: Imidazole glycerol phosphate synthase subunit HisF (258 aa).

Residues aspartate 12 and aspartate 131 contribute to the active site.

The protein belongs to the HisA/HisF family. In terms of assembly, heterodimer of HisH and HisF.

Its subcellular location is the cytoplasm. It catalyses the reaction 5-[(5-phospho-1-deoxy-D-ribulos-1-ylimino)methylamino]-1-(5-phospho-beta-D-ribosyl)imidazole-4-carboxamide + L-glutamine = D-erythro-1-(imidazol-4-yl)glycerol 3-phosphate + 5-amino-1-(5-phospho-beta-D-ribosyl)imidazole-4-carboxamide + L-glutamate + H(+). It functions in the pathway amino-acid biosynthesis; L-histidine biosynthesis; L-histidine from 5-phospho-alpha-D-ribose 1-diphosphate: step 5/9. Functionally, IGPS catalyzes the conversion of PRFAR and glutamine to IGP, AICAR and glutamate. The HisF subunit catalyzes the cyclization activity that produces IGP and AICAR from PRFAR using the ammonia provided by the HisH subunit. The protein is Imidazole glycerol phosphate synthase subunit HisF of Nocardioides sp. (strain ATCC BAA-499 / JS614).